The primary structure comprises 610 residues: Protein mono-ADP-ribosyltransferase PARP6 (610 aa).

In terms of domain architecture, PARP catalytic spans 374 to 600; sequence EMTQGSYLEI…QDPKIQKEIM (227 aa). Residue Asp580 is modified to ADP-ribosyl aspartic acid.

Belongs to the ARTD/PARP family. Auto-mono-ADP-ribosylated.

The enzyme catalyses L-aspartyl-[protein] + NAD(+) = 4-O-(ADP-D-ribosyl)-L-aspartyl-[protein] + nicotinamide. It catalyses the reaction L-cysteinyl-[protein] + NAD(+) = S-(ADP-D-ribosyl)-L-cysteinyl-[protein] + nicotinamide + H(+). Functionally, mono-ADP-ribosyltransferase that mediates mono-ADP-ribosylation of target proteins. This Pongo abelii (Sumatran orangutan) protein is Protein mono-ADP-ribosyltransferase PARP6.